A 104-amino-acid chain; its full sequence is Co-chaperonin GroES 2 (104 aa).

It belongs to the GroES chaperonin family. Heptamer of 7 subunits arranged in a ring. Interacts with the chaperonin GroEL.

Its subcellular location is the cytoplasm. In terms of biological role, together with the chaperonin GroEL, plays an essential role in assisting protein folding. The GroEL-GroES system forms a nano-cage that allows encapsulation of the non-native substrate proteins and provides a physical environment optimized to promote and accelerate protein folding. GroES binds to the apical surface of the GroEL ring, thereby capping the opening of the GroEL channel. The protein is Co-chaperonin GroES 2 of Bradyrhizobium diazoefficiens (strain JCM 10833 / BCRC 13528 / IAM 13628 / NBRC 14792 / USDA 110).